The chain runs to 350 residues: (S)-tetrahydroprotoberberine N-methyltransferase (350 aa).

S-adenosyl-L-methionine is bound by residues S91, G129, N153, Q157, D179, V180, and V195. C325 is a catalytic residue.

Belongs to the CFA/CMAS family. Homodimer.

Its subcellular location is the cytoplasm. The catalysed reaction is (S)-stylopine + S-adenosyl-L-methionine = (S)-cis-N-methylstylopine + S-adenosyl-L-homocysteine. The enzyme catalyses (S)-tetrahydropalmatine + S-adenosyl-L-methionine = (S)-cis-N-methyltetrahydropalmatine + S-adenosyl-L-homocysteine. It catalyses the reaction (S)-canadine + S-adenosyl-L-methionine = (S)-cis-N-methylcanadine + S-adenosyl-L-homocysteine. It carries out the reaction (S)-scoulerine + S-adenosyl-L-methionine = (S)-cis-N-methylscoulerine + S-adenosyl-L-homocysteine. It functions in the pathway alkaloid biosynthesis. Its function is as follows. N-methyltransferase with a broad substrate range, accepting protoberberine alkaloids (R,S)-stylopine, (R,S)-nandinine and (R,S)-tetrahydropalmatine, and to a lesser extent (R,S)-canadine, (R,S)-tetrahydrogroenlandicine (cheilanthifoline) and (S)-scoulerine. The sequence is that of (S)-tetrahydroprotoberberine N-methyltransferase from Eschscholzia californica (California poppy).